The chain runs to 385 residues: 8-amino-7-oxononanoate synthase (385 aa).

Arg-21 contributes to the substrate binding site. 108-109 (GF) is a binding site for pyridoxal 5'-phosphate. His-133 contacts substrate. Ser-179, His-207, and Thr-233 together coordinate pyridoxal 5'-phosphate. Lys-236 is subject to N6-(pyridoxal phosphate)lysine. Position 352 (Thr-352) interacts with substrate.

It belongs to the class-II pyridoxal-phosphate-dependent aminotransferase family. BioF subfamily. Homodimer. Requires pyridoxal 5'-phosphate as cofactor.

It carries out the reaction 6-carboxyhexanoyl-[ACP] + L-alanine + H(+) = (8S)-8-amino-7-oxononanoate + holo-[ACP] + CO2. It functions in the pathway cofactor biosynthesis; biotin biosynthesis. Its function is as follows. Catalyzes the decarboxylative condensation of pimeloyl-[acyl-carrier protein] and L-alanine to produce 8-amino-7-oxononanoate (AON), [acyl-carrier protein], and carbon dioxide. This Salmonella arizonae (strain ATCC BAA-731 / CDC346-86 / RSK2980) protein is 8-amino-7-oxononanoate synthase.